Consider the following 397-residue polypeptide: Putative 8-amino-7-oxononanoate synthase (397 aa).

Position 22 (arginine 22) interacts with substrate. 109-110 provides a ligand contact to pyridoxal 5'-phosphate; it reads GW. Histidine 139 contacts substrate. Pyridoxal 5'-phosphate-binding positions include serine 187, 212–215, and 241–244; these read DEAH and TFSK. At lysine 244 the chain carries N6-(pyridoxal phosphate)lysine. A substrate-binding site is contributed by threonine 358.

Belongs to the class-II pyridoxal-phosphate-dependent aminotransferase family. BioF subfamily. As to quaternary structure, homodimer. Requires pyridoxal 5'-phosphate as cofactor.

It catalyses the reaction 6-carboxyhexanoyl-[ACP] + L-alanine + H(+) = (8S)-8-amino-7-oxononanoate + holo-[ACP] + CO2. It participates in cofactor biosynthesis; biotin biosynthesis. In terms of biological role, catalyzes the decarboxylative condensation of pimeloyl-[acyl-carrier protein] and L-alanine to produce 8-amino-7-oxononanoate (AON), [acyl-carrier protein], and carbon dioxide. In Bordetella parapertussis (strain 12822 / ATCC BAA-587 / NCTC 13253), this protein is Putative 8-amino-7-oxononanoate synthase (bioF).